The primary structure comprises 395 residues: Acetate kinase (395 aa).

Position 8 (Asn8) interacts with Mg(2+). Lys15 serves as a coordination point for ATP. Arg94 lines the substrate pocket. Catalysis depends on Asp151, which acts as the Proton donor/acceptor. Residues 210–214, 284–286, and 329–333 contribute to the ATP site; these read HLGNG, DMR, and GIGEN. Residue Glu382 participates in Mg(2+) binding.

This sequence belongs to the acetokinase family. As to quaternary structure, homodimer. Mg(2+) is required as a cofactor. The cofactor is Mn(2+).

It localises to the cytoplasm. The enzyme catalyses acetate + ATP = acetyl phosphate + ADP. It participates in metabolic intermediate biosynthesis; acetyl-CoA biosynthesis; acetyl-CoA from acetate: step 1/2. Functionally, catalyzes the formation of acetyl phosphate from acetate and ATP. Can also catalyze the reverse reaction. This is Acetate kinase from Protochlamydia amoebophila (strain UWE25).